Reading from the N-terminus, the 158-residue chain is Transcriptional repressor NrdR (158 aa).

A zinc finger lies at Cys-3 to Cys-34. Residues Leu-49–Asp-139 form the ATP-cone domain.

Belongs to the NrdR family. Zn(2+) serves as cofactor.

Functionally, negatively regulates transcription of bacterial ribonucleotide reductase nrd genes and operons by binding to NrdR-boxes. The sequence is that of Transcriptional repressor NrdR from Brucella abortus (strain S19).